The primary structure comprises 274 residues: Adenosylcobinamide-GDP ribazoletransferase (274 aa).

7 helical membrane-spanning segments follow: residues 46 to 66, 69 to 89, 117 to 137, 151 to 173, 192 to 212, 216 to 236, and 253 to 273; these read VMAS…AIAF, TSLG…WELF, IIAD…SILI, WWMV…HSRL, HTII…PLAM, ELIT…LVEI, and FIMH…VGIV.

It belongs to the CobS family. Requires Mg(2+) as cofactor.

The protein localises to the cell membrane. It carries out the reaction alpha-ribazole + adenosylcob(III)inamide-GDP = adenosylcob(III)alamin + GMP + H(+). The enzyme catalyses alpha-ribazole 5'-phosphate + adenosylcob(III)inamide-GDP = adenosylcob(III)alamin 5'-phosphate + GMP + H(+). Its pathway is cofactor biosynthesis; adenosylcobalamin biosynthesis; adenosylcobalamin from cob(II)yrinate a,c-diamide: step 7/7. Joins adenosylcobinamide-GDP and alpha-ribazole to generate adenosylcobalamin (Ado-cobalamin). Also synthesizes adenosylcobalamin 5'-phosphate from adenosylcobinamide-GDP and alpha-ribazole 5'-phosphate. In Corynebacterium diphtheriae (strain ATCC 700971 / NCTC 13129 / Biotype gravis), this protein is Adenosylcobinamide-GDP ribazoletransferase.